A 261-amino-acid polypeptide reads, in one-letter code: tRNA pseudouridine synthase A (261 aa).

D52 functions as the Nucleophile in the catalytic mechanism. Residue Y111 coordinates substrate.

Belongs to the tRNA pseudouridine synthase TruA family. Homodimer.

It catalyses the reaction uridine(38/39/40) in tRNA = pseudouridine(38/39/40) in tRNA. Its function is as follows. Formation of pseudouridine at positions 38, 39 and 40 in the anticodon stem and loop of transfer RNAs. This chain is tRNA pseudouridine synthase A, found in Jannaschia sp. (strain CCS1).